The chain runs to 68 residues: Small cysteine-rich protein 5 (68 aa).

A signal peptide spans 1-24; it reads MAVKFHLCLLLIILVGMGAHVAFA.

This sequence belongs to the Cnidaria small cysteine-rich protein (SCRiP) family. gamma subfamily. Post-translationally, contains 4 disulfide bonds.

It localises to the secreted. It is found in the nematocyst. Its function is as follows. Induces neurotoxic symptoms on zebrafish. Has also been claimed to be implied in calcification, but tests on homolog proteins suggest that proteins of this family have a neurotoxic function and not a calcification function. In Orbicella faveolata (Mountainous star coral), this protein is Small cysteine-rich protein 5.